The primary structure comprises 1547 residues: Mediator of RNA polymerase II transcription subunit 12 (1547 aa).

Disordered regions lie at residues 1–63 (MTSR…RPHI) and 1356–1509 (PVIP…QQRD). Pro residues predominate over residues 1357–1369 (VIPPLEPPQPPNP). Polar residues predominate over residues 1379 to 1390 (YQSPQMTSNTAA). 2 stretches are compositionally biased toward low complexity: residues 1398 to 1413 (QQQQ…QQTQ) and 1446 to 1468 (LSPL…RASQ). Polar residues-rich tracts occupy residues 1469–1480 (PSPIHSQRPTSV) and 1499–1509 (AHTSYVNQQRD).

This sequence belongs to the Mediator complex subunit 12 family. Component of the SRB8-11 complex, which itself associates with the Mediator complex.

Its subcellular location is the nucleus. Its function is as follows. Component of the SRB8-11 complex. The SRB8-11 complex is a regulatory module of the Mediator complex which is itself involved in regulation of basal and activated RNA polymerase II-dependent transcription. The SRB8-11 complex may be involved in the transcriptional repression of a subset of genes regulated by Mediator. It may inhibit the association of the Mediator complex with RNA polymerase II to form the holoenzyme complex. The protein is Mediator of RNA polymerase II transcription subunit 12 (SRB8) of Phaeosphaeria nodorum (strain SN15 / ATCC MYA-4574 / FGSC 10173) (Glume blotch fungus).